Reading from the N-terminus, the 503-residue chain is Probable cytosol aminopeptidase (503 aa).

Mn(2+)-binding residues include lysine 274 and aspartate 279. Lysine 286 is a catalytic residue. Mn(2+) is bound by residues aspartate 297, aspartate 356, and glutamate 358. Arginine 360 is a catalytic residue.

It belongs to the peptidase M17 family. Requires Mn(2+) as cofactor.

It localises to the cytoplasm. It catalyses the reaction Release of an N-terminal amino acid, Xaa-|-Yaa-, in which Xaa is preferably Leu, but may be other amino acids including Pro although not Arg or Lys, and Yaa may be Pro. Amino acid amides and methyl esters are also readily hydrolyzed, but rates on arylamides are exceedingly low.. It carries out the reaction Release of an N-terminal amino acid, preferentially leucine, but not glutamic or aspartic acids.. Functionally, presumably involved in the processing and regular turnover of intracellular proteins. Catalyzes the removal of unsubstituted N-terminal amino acids from various peptides. This chain is Probable cytosol aminopeptidase, found in Burkholderia pseudomallei (strain 1710b).